The chain runs to 1132 residues: Myosin-binding protein C, fast-type (1132 aa).

The tract at residues 1–59 (MPEPSKAAPKKEAKKKEEKKEEKKEAPPPQEHKDEAPDDVHPPETPDPEGLFLSKPQNV) is disordered. Residues 9-44 (PKKEAKKKEEKKEEKKEAPPPQEHKDEAPDDVHPPE) are compositionally biased toward basic and acidic residues. 5 consecutive Ig-like C2-type domains span residues 48-149 (PEGL…SIDV), 249-338 (SEAF…VKEP), 339-429 (PVTV…VEEK), 430-530 (QLEV…KQEP), and 531-630 (PKIH…VVDV). Fibronectin type-III domains follow at residues 633 to 729 (PPQS…IAPT) and 731 to 826 (EPTH…IREI). Residues 830 to 923 (PKIRLPRHLR…ATLRLRVVER (94 aa)) form the Ig-like C2-type 6 domain. The Fibronectin type-III 3 domain maps to 926–1022 (PPQAVRVMEV…HNTARIAKEG (97 aa)). Residues 1039 to 1132 (PQFLTPLVDR…ECRLDVRVPQ (94 aa)) form the Ig-like C2-type 7 domain.

Belongs to the immunoglobulin superfamily. MyBP family.

Thick filament-associated protein located in the crossbridge region of vertebrate striated muscle a bands. In vitro it binds MHC, F-actin and native thin filaments, and modifies the activity of actin-activated myosin ATPase. It may modulate muscle contraction or may play a more structural role. The sequence is that of Myosin-binding protein C, fast-type (MYBPC2) from Gallus gallus (Chicken).